A 192-amino-acid chain; its full sequence is NADH:FMN oxidoreductase (192 aa).

The tract at residues 1-20 (MSDKPNAVSSHTTPDVPEVA) is disordered. Residues 60 to 63 (TATS), 77 to 84 (NIAETSSS), A111, and R117 each bind FMN.

The protein belongs to the non-flavoprotein flavin reductase family.

Its subcellular location is the cytoplasm. It catalyses the reaction FMNH2 + NAD(+) = FMN + NADH + 2 H(+). It functions in the pathway sulfur metabolism; dibenzothiophene degradation. Its function is as follows. An NADH:FMN oxidoreductase which supplies reduced FMN for the '4S' desulfurization pathway that removes covalently bound sulfur from dibenzothiophene (DBT) without breaking carbon-carbon bonds. Provides DszA and DszC (DBTO2-monooxygenase and DBT-monooxygenase respectively) with reduced flavin (FMN). The chain is NADH:FMN oxidoreductase from Rhodococcus erythropolis (Arthrobacter picolinophilus).